The chain runs to 72 residues: Translation initiation factor IF-1 (72 aa).

The 72-residue stretch at 1-72 (MAKEEMLEFP…TKGRINYRFK (72 aa)) folds into the S1-like domain.

It belongs to the IF-1 family. In terms of assembly, component of the 30S ribosomal translation pre-initiation complex which assembles on the 30S ribosome in the order IF-2 and IF-3, IF-1 and N-formylmethionyl-tRNA(fMet); mRNA recruitment can occur at any time during PIC assembly.

The protein resides in the cytoplasm. Functionally, one of the essential components for the initiation of protein synthesis. Stabilizes the binding of IF-2 and IF-3 on the 30S subunit to which N-formylmethionyl-tRNA(fMet) subsequently binds. Helps modulate mRNA selection, yielding the 30S pre-initiation complex (PIC). Upon addition of the 50S ribosomal subunit IF-1, IF-2 and IF-3 are released leaving the mature 70S translation initiation complex. The sequence is that of Translation initiation factor IF-1 from Paracoccus denitrificans (strain Pd 1222).